We begin with the raw amino-acid sequence, 324 residues long: Polycomb complex protein BMI-1 (324 aa).

Residues 18–57 (CVLCGGYFIDATTIIECLHSFCKTCIVRYLETSKYCPICD) form an RING-type zinc finger. Residues 81 to 95 (KLVPGLFKNEMKRRR) carry the Nuclear localization signal motif. The segment at 160 to 180 (RYLRCPAAMTVMHLRKFLRSK) is interaction with PHC2. The interval 162 to 226 (LRCPAAMTVM…GPLPLKYRVR (65 aa)) is interaction with E4F1. Residues 232–324 (MKMSHQRDGL…LNGSSATSSG (93 aa)) are disordered. The span at 264-276 (PSTSSCLPSPSTP) shows a compositional bias: low complexity. The span at 277-307 (VQSPHPQFPHISSTMNGTSNSPSANHQSSFA) shows a compositional bias: polar residues. Positions 313–324 (SSLNGSSATSSG) are enriched in low complexity.

As to quaternary structure, component of a PRC1-like complex. Identified in a PRC1-like HPRC-H complex with CBX2, CBX4, CBX8, PHC1, PHC2, PHC3, RING1 and RNF2. Interacts with RNF2/RING2. Interacts with RING1. Part of a complex that contains RNF2, UB2D3 and BMI1, where RNF2 and BMI1 form a tight heterodimer, and UB2D3 interacts only with RNF2. The complex composed of RNF2, UB2D3 and BMI1 binds nucleosomes, and has activity only with nucleosomal histone H2A. Interacts with CBX7 and CBX8. Interacts with SPOP. Part of a complex consisting of BMI1, CUL3 and SPOP. Interacts with E4F1. Interacts with PHC2. Interacts with zinc finger protein ZNF277. May be part of a complex including at least ZNF277, BMI1 and RNF2/RING2. Post-translationally, may be polyubiquitinated; which does not lead to proteasomal degradation. Monoubiquitinated. In terms of tissue distribution, detected in most organs with high expression levels in thymus, heart, brain and testis.

It localises to the nucleus. It is found in the cytoplasm. Its function is as follows. Component of a Polycomb group (PcG) multiprotein PRC1-like complex, a complex class required to maintain the transcriptionally repressive state of many genes, including Hox genes, throughout development. PcG PRC1 complex acts via chromatin remodeling and modification of histones; it mediates monoubiquitination of histone H2A 'Lys-119', rendering chromatin heritably changed in its expressibility. The complex composed of RNF2, UB2D3 and BMI1 binds nucleosomes, and has activity only with nucleosomal histone H2A. In the PRC1-like complex, regulates the E3 ubiquitin-protein ligase activity of RNF2/RING2. In Mus musculus (Mouse), this protein is Polycomb complex protein BMI-1 (Bmi1).